Here is a 329-residue protein sequence, read N- to C-terminus: UDP-2,3-diacylglucosamine pyrophosphatase LpxG (329 aa).

The helical transmembrane segment at 2 to 24 (FVSVGITASLTTILAAPVLTWVW) threads the bilayer. D59, H61, D91, N123, H257, and H259 together coordinate a divalent metal cation.

It belongs to the metallophosphoesterase superfamily. LpxG family. The cofactor is Mn(2+).

It is found in the cell inner membrane. It carries out the reaction UDP-2,3-diacyl-alpha-D-glucosamine + H2O = 2,3-diacyl-alpha-D-glucosaminyl 1-phosphate + UMP + 2 H(+). The protein operates within glycolipid biosynthesis; lipid IV(A) biosynthesis. Hydrolyzes the pyrophosphate bond of UDP-2,3-diacylglucosamine to form 2,3-diacylglucosamine 1-phosphate (lipid X) and UMP by catalyzing the attack of water at the alpha-P atom. Involved in the biosynthesis of lipid A, a phosphorylated glycolipid that anchors the lipooligosaccharide (LOS) to the outer membrane of the cell. Can functionally complement lpxH deficiency in E.coli. Overexpression of LpxG results in toxic accumulation of lipid X and profoundly reduces the infectivity of C.trachomatis. Can utilize UDP-2-N,3-O-bis((3R)-3-hydroxytetradecanoyl)-alpha-D-glucosamine as substrate in vitro, but the substrate is likely UDP-2-N-((3R)-3-hydroxyicosanoyl),3-O-(tetradecanoyl)-alpha-D-glucosamine in vivo. The polypeptide is UDP-2,3-diacylglucosamine pyrophosphatase LpxG (Chlamydia trachomatis serovar D (strain ATCC VR-885 / DSM 19411 / UW-3/Cx)).